The following is a 651-amino-acid chain: PTS system sucrose-specific EIIBCA component (651 aa).

The region spanning 3–86 is the PTS EIIB type-1 domain; sequence HQEVADRVLN…IVKTGLKEVT (84 aa). The active-site Phosphocysteine intermediate; for EIIB activity is the C25. 10 helical membrane passes run 109–129, 158–178, 182–202, 204–224, 226–246, 264–284, 303–323, 345–365, 404–424, and 444–464; these read VLSD…LLMA, MINA…GFSA, FGGN…PSLV, GYSV…VFGL, VAQA…FILA, FTPM…VGPV, TGWI…ITGL, FIFP…LAIF, FVFA…FHVL, and IPAF…PTFI. The region spanning 121–481 is the PTS EIIC type-1 domain; it reads LVAGGLLMAL…DDRDQVKSPA (361 aa). Residues 510–614 enclose the PTS EIIA type-1 domain; that stretch reads DQVFSAEIMG…DPTVMLIVTN (105 aa). The active-site Tele-phosphohistidine intermediate; for EIIA activity is the H562.

It localises to the cell membrane. The catalysed reaction is N(pros)-phospho-L-histidyl-[protein](out) + sucrose = sucrose 6(G)-phosphate(in) + L-histidyl-[protein]. Functionally, the phosphoenolpyruvate-dependent sugar phosphotransferase system (sugar PTS), a major carbohydrate active transport system, catalyzes the phosphorylation of incoming sugar substrates concomitantly with their translocation across the cell membrane. This system is involved in sucrose transport. This chain is PTS system sucrose-specific EIIBCA component (scrA), found in Pediococcus pentosaceus.